Here is a 220-residue protein sequence, read N- to C-terminus: UPF0502 protein Pnap_3223 (220 aa).

This sequence belongs to the UPF0502 family.

The sequence is that of UPF0502 protein Pnap_3223 from Polaromonas naphthalenivorans (strain CJ2).